Consider the following 304-residue polypeptide: Sperm microtubule inner protein 6 (304 aa).

Belongs to the SPMIP6 family. Microtubule inner protein component of sperm flagellar doublet microtubules. Interacts with alpha-tubulin.

It localises to the cytoplasm. Its subcellular location is the cytoskeleton. It is found in the nucleus. The protein localises to the mitochondrion. The protein resides in the flagellum axoneme. In terms of biological role, may participate in intramanchette transport and midpiece formation of the sperm tail. May play a potential role in somatic cell proliferation. The chain is Sperm microtubule inner protein 6 (SPMIP6) from Bos taurus (Bovine).